The chain runs to 563 residues: Glutamate--tRNA ligase (563 aa).

A disordered region spans residues 61–94 (PEEQQKEVESLGGLEQHTKKEEKPKGLPELKNTE). Over residues 76 to 94 (QHTKKEEKPKGLPELKNTE) the composition is skewed to basic and acidic residues. The 'HIGH' region motif lies at 104–114 (PNPSGPLHIGH).

This sequence belongs to the class-I aminoacyl-tRNA synthetase family. Glutamate--tRNA ligase type 2 subfamily.

The protein resides in the cytoplasm. The enzyme catalyses tRNA(Glu) + L-glutamate + ATP = L-glutamyl-tRNA(Glu) + AMP + diphosphate. Functionally, catalyzes the attachment of glutamate to tRNA(Glu) in a two-step reaction: glutamate is first activated by ATP to form Glu-AMP and then transferred to the acceptor end of tRNA(Glu). This is Glutamate--tRNA ligase from Methanosphaera stadtmanae (strain ATCC 43021 / DSM 3091 / JCM 11832 / MCB-3).